We begin with the raw amino-acid sequence, 441 residues long: Protein eva-1 homolog C (441 aa).

A disordered region spans residues 1–23 (MLLPGRARQPPTPQPVQHPGLRR). The first 48 residues, 1 to 48 (MLLPGRARQPPTPQPVQHPGLRRQVEPPGQLLRLFYCTVLVCSKEISA), serve as a signal peptide directing secretion. The Extracellular portion of the chain corresponds to 49–322 (LTDFSGYLTK…AYIRAHPERA (274 aa)). An N-linked (GlcNAc...) asparagine glycan is attached at Asn-62. Positions 67–159 (ACDGDYLNLQ…KYLLVSFKCQ (93 aa)) constitute an SUEL-type lectin 1 domain. N-linked (GlcNAc...) asparagine glycosylation is present at Asn-165. The 93-residue stretch at 168–260 (VCEDQELKLH…KYLTVTYACV (93 aa)) folds into the SUEL-type lectin 2 domain. Residues 323 to 343 (ALLFVSSVCIGLALTLCALVI) form a helical membrane-spanning segment. The Cytoplasmic portion of the chain corresponds to 344–441 (RESCAKDFRD…SLPRNMGQFY (98 aa)). The disordered stretch occupies residues 362–390 (VPGSDKVEEDSEDEEEEEDPSESDFPGEL). Residues 368–383 (VEEDSEDEEEEEDPSE) are compositionally biased toward acidic residues.

It belongs to the EVA1 family. As to expression, ubiquitous.

The protein resides in the membrane. Functionally, binds heparin. This chain is Protein eva-1 homolog C (EVA1C), found in Homo sapiens (Human).